The following is an 81-amino-acid chain: Sec-independent protein translocase protein TatA (81 aa).

A helical transmembrane segment spans residues 1 to 21 (MGMPSGQELLIILAIVVLLFG). Residues 45-81 (NEDDDTEVKSASTEAPKKVESAEEVASKESSKTPTQA) form a disordered region. The span at 59-75 (APKKVESAEEVASKESS) shows a compositional bias: basic and acidic residues.

This sequence belongs to the TatA/E family. As to quaternary structure, the Tat system comprises two distinct complexes: a TatABC complex, containing multiple copies of TatA, TatB and TatC subunits, and a separate TatA complex, containing only TatA subunits. Substrates initially bind to the TatABC complex, which probably triggers association of the separate TatA complex to form the active translocon.

The protein localises to the cell inner membrane. Its function is as follows. Part of the twin-arginine translocation (Tat) system that transports large folded proteins containing a characteristic twin-arginine motif in their signal peptide across membranes. TatA could form the protein-conducting channel of the Tat system. The sequence is that of Sec-independent protein translocase protein TatA from Sulfurimonas denitrificans (strain ATCC 33889 / DSM 1251) (Thiomicrospira denitrificans (strain ATCC 33889 / DSM 1251)).